The sequence spans 592 residues: Monocopper oxidase-like protein SKS2 (592 aa).

The signal sequence occupies residues 1-23; sequence MAATDFFFAFVFSFALIFGFSFA. 11 N-linked (GlcNAc...) asparagine glycosylation sites follow: N61, N110, N172, N203, N259, N280, N295, N344, N364, N433, and N447. Position 455 (H455) interacts with Cu cation. N-linked (GlcNAc...) asparagine glycosylation is found at N476 and N536. S564 carries the GPI-anchor amidated serine lipid modification. Positions 565-592 are cleaved as a propeptide — removed in mature form; that stretch reads ATKSMTNGQLILIFSMMMVLLSSFSSFC.

This sequence belongs to the multicopper oxidase family. It depends on Cu cation as a cofactor.

Its subcellular location is the cell membrane. This Arabidopsis thaliana (Mouse-ear cress) protein is Monocopper oxidase-like protein SKS2 (SKS2).